We begin with the raw amino-acid sequence, 175 residues long: MKTMFILALLAFTATSAVAQLYTTCSQGYGQCQQQPQPQPQMNTCSAFLQQCIQTPYVQSQMWQASSCQLMRQQCCQPLAQISEQARCQAVCSVSQIIMRQQQGQRFGQPQQQQGQSFSQPQQQVPVEIMRMVLQTLPSMCSVNIPQYCTTTPCSTITPAIYSIPMTATCAGGAC.

An N-terminal signal peptide occupies residues 1–19 (MKTMFILALLAFTATSAVA).

The protein belongs to the prolamin family. In terms of processing, contains 7 disulfide bonds.

Seed storage protein. Not integrated in the gluten polymer through disulfide bonds, unless incorporated by reduction and reoxidation during dough making. Increases dough strength and bread volume, but decreases dough stability when added into a base wheat flour. This is Avenin-like a7 from Triticum aestivum (Wheat).